A 316-amino-acid chain; its full sequence is Pantothenate kinase (316 aa).

Residue 95–102 (GSVAVGKS) coordinates ATP.

Belongs to the prokaryotic pantothenate kinase family.

It localises to the cytoplasm. It catalyses the reaction (R)-pantothenate + ATP = (R)-4'-phosphopantothenate + ADP + H(+). Its pathway is cofactor biosynthesis; coenzyme A biosynthesis; CoA from (R)-pantothenate: step 1/5. This is Pantothenate kinase from Shewanella halifaxensis (strain HAW-EB4).